The following is an 858-amino-acid chain: Adenylate cyclase, germination specific (858 aa).

Residues 1–18 lie on the Cytoplasmic side of the membrane; the sequence is MKKTFVKILSKSYVEGYP. The chain crosses the membrane as a helical; Signal-anchor for type II membrane protein span at residues 19 to 41; the sequence is VGFFIGLIILAIFGSMVCIFSFM. The Extracellular portion of the chain corresponds to 42-858; it reads HYSEEENSNI…DENVESKKNK (817 aa). Residues 86-317 enclose the CHASE domain; that stretch reads VNPNFDRNDF…DCVLKLWIFT (232 aa). Positions 396–526 constitute a Guanylate cyclase domain; the sequence is CVFFLDIAGF…DTVNVASRME (131 aa). Mg(2+)-binding residues include D401, I402, and D445. 3 disordered regions span residues 650 to 691, 767 to 803, and 827 to 858; these read YYYH…YHDT, SDNV…STNE, and ENCD…KKNK. 3 stretches are compositionally biased toward low complexity: residues 767 to 778, 788 to 797, and 834 to 849; these read SDNVNNYENNNN, GDNNNINDNN, and DNNN…NNND.

It belongs to the adenylyl cyclase class-4/guanylyl cyclase family.

It localises to the membrane. The catalysed reaction is ATP = 3',5'-cyclic AMP + diphosphate. With respect to regulation, insensitive to guanine nucleotides. Functionally, has a large extracellular domain which may be involved in the recognition of an extracellular signal present during germination, leading to activation or inhibition of cAMP synthesis by the cytoplasmic domain. This is Adenylate cyclase, germination specific (acgA) from Dictyostelium discoideum (Social amoeba).